Consider the following 494-residue polypeptide: Serine/arginine-rich splicing factor 4 (494 aa).

Positions 2 to 72 (PRVYIGRLSY…ERVIVEHARG (71 aa)) constitute an RRM 1 domain. Disordered regions lie at residues 72–95 (GPRR…GRDK) and 169–494 (KIRL…HSRS). Residues serine 78 and serine 84 each carry the phosphoserine modification. The RRM 2 domain occupies 104–177 (YRLIVENLSS…RKIRLVEDKP (74 aa)). Basic residues-rich tracts occupy residues 179-206 (SRRR…KSRS) and 214-246 (SHSK…KKEK). The segment covering 247–256 (SRSPSKEKSR) has biased composition (basic and acidic residues). The segment covering 257–267 (SRSHSAGKSRS) has biased composition (basic residues). Basic and acidic residues predominate over residues 268 to 278 (KSKDQAEEKIQ). Over residues 286–302 (PKSRSPSRHKSKSKSRS) the composition is skewed to basic residues. A phosphoserine mark is found at serine 288, serine 290, and serine 292. The segment covering 303–327 (RSQERRVEEEKRGSVSRGRSQEKSL) has biased composition (basic and acidic residues). Composition is skewed to basic residues over residues 328–359 (RQSR…GRKR) and 367–382 (RSRS…KRGS). A compositionally biased stretch (basic and acidic residues) spans 411–431 (VSKEREHAKSESSQREGRGES). Serine 431, serine 446, serine 456, serine 458, and serine 460 each carry phosphoserine. Positions 449–460 (KSKPNLPSESRS) are enriched in low complexity. Residues 461 to 494 (RSKSASKTRSRSKSRSRSASRSPSRSRSRSHSRS) are compositionally biased toward basic residues.

Belongs to the splicing factor SR family. In terms of assembly, found in a pre-mRNA splicing complex with SRSF4/SFRS4, SRSF5/SFRS5, SNRNP70, SNRPA1, SRRM1 and SRRM2. Interacts with PNN. Post-translationally, extensively phosphorylated on serine residues in the RS domain.

The protein localises to the nucleus speckle. Functionally, plays a role in alternative splice site selection during pre-mRNA splicing. Represses the splicing of MAPT/Tau exon 10. The protein is Serine/arginine-rich splicing factor 4 (SRSF4) of Homo sapiens (Human).